Reading from the N-terminus, the 250-residue chain is UDP-2,3-diacylglucosamine hydrolase (250 aa).

Mn(2+) is bound by residues Asp-8, His-10, Asp-41, Asn-79, and His-114. 79-80 (NR) serves as a coordination point for substrate. Substrate contacts are provided by Asp-122, Ser-160, Gln-167, and His-195. Mn(2+) contacts are provided by His-195 and His-197.

It belongs to the LpxH family. It depends on Mn(2+) as a cofactor.

Its subcellular location is the cell inner membrane. The catalysed reaction is UDP-2-N,3-O-bis[(3R)-3-hydroxytetradecanoyl]-alpha-D-glucosamine + H2O = 2-N,3-O-bis[(3R)-3-hydroxytetradecanoyl]-alpha-D-glucosaminyl 1-phosphate + UMP + 2 H(+). The protein operates within glycolipid biosynthesis; lipid IV(A) biosynthesis; lipid IV(A) from (3R)-3-hydroxytetradecanoyl-[acyl-carrier-protein] and UDP-N-acetyl-alpha-D-glucosamine: step 4/6. Its function is as follows. Hydrolyzes the pyrophosphate bond of UDP-2,3-diacylglucosamine to yield 2,3-diacylglucosamine 1-phosphate (lipid X) and UMP by catalyzing the attack of water at the alpha-P atom. Involved in the biosynthesis of lipid A, a phosphorylated glycolipid that anchors the lipopolysaccharide to the outer membrane of the cell. This is UDP-2,3-diacylglucosamine hydrolase from Nitrosococcus oceani (strain ATCC 19707 / BCRC 17464 / JCM 30415 / NCIMB 11848 / C-107).